Reading from the N-terminus, the 502-residue chain is MSIKAEEISTLIKQQIQNYQSDIEVQDVGTVIQVGDGIARVHGLDNCMAGELVEFSNGVLGMAQNLEESNVGIVILGPFSEIREGDEVKRTGRIMEVPVGEELIGRIVNPLGQPVDGLGPILTSKTRPIESPAPGVMDRKSVHEPLQTGIKAIDALIPIGRGQRELIIGDRQTGKTSVAIDAILNQKDQDMICVYVAIGQKESTVRGVVETLRKHGALDYTIVVTASASQPAPLLYLAPYAGVTMAEEFMYNGKHVLVVYDDLSKQAAAYRELSLLLRRPPGREAFPGDVFYLHSRLLERAAKLSDAKGAGSITALPFVETQAGDISAYIPTNVISITDGQIFLQSDLFFSGVRPAINAGLSVSRVGGSAQIKAMKKVSGTLRLDLASYRELEAFAQFGSDLDQATQAKLNRGARTVEVLKQDLNKPLPVEKQVAILYALTKGYLDDIPVADIRRFEEEYYMYLDQNHKDLLDGIAKTGNLPADEDFKAAIEGFKRTFAPSN.

169-176 (GDRQTGKT) is a binding site for ATP.

The protein belongs to the ATPase alpha/beta chains family. As to quaternary structure, F-type ATPases have 2 components, CF(1) - the catalytic core - and CF(0) - the membrane proton channel. CF(1) has five subunits: alpha(3), beta(3), gamma(1), delta(1), epsilon(1). CF(0) has three main subunits: a(1), b(2) and c(9-12). The alpha and beta chains form an alternating ring which encloses part of the gamma chain. CF(1) is attached to CF(0) by a central stalk formed by the gamma and epsilon chains, while a peripheral stalk is formed by the delta and b chains. The F(1)F(0) complex interacts with SpoIIIJ and YqjG; YqgA is found in the same complex.

Its subcellular location is the cell membrane. It is found in the membrane raft. It carries out the reaction ATP + H2O + 4 H(+)(in) = ADP + phosphate + 5 H(+)(out). Its function is as follows. Produces ATP from ADP in the presence of a proton gradient across the membrane. The alpha chain is a regulatory subunit. The polypeptide is ATP synthase subunit alpha (Bacillus subtilis (strain 168)).